The primary structure comprises 344 residues: L-rhamnose-proton symporter (344 aa).

Transmembrane regions (helical) follow at residues 4–24, 38–58, 68–88, 101–121, 137–157, 175–195, 214–234, 259–279, 290–310, and 321–341; these read AITMGIFWHLIGAASAACFYA, WSVGGIVSWLILPWAISALLL, FNLSTLLPVFLFGAMWGIGNI, MGIGIAIGITLIVGTLMTPII, TLLGVFVALIGVGIVTRAGQL, LLLAVMCGIFSAGMSFAMNAA, LPSYVVIMGGGALVNLGFCFI, ILLSALGGLMWYLQFFFYAWG, MSWMLHMSFYVLCGGLVGLVL, and VAVLSLGCVVIIIAANIVGLG.

The protein belongs to the L-rhamnose transporter (TC 2.A.7.6) family.

The protein localises to the cell inner membrane. The enzyme catalyses L-rhamnopyranose(in) + H(+)(in) = L-rhamnopyranose(out) + H(+)(out). Functionally, uptake of L-rhamnose across the cytoplasmic membrane with the concomitant transport of protons into the cell (symport system). This Salmonella dublin (strain CT_02021853) protein is L-rhamnose-proton symporter.